Here is a 967-residue protein sequence, read N- to C-terminus: Sodium/potassium exporting P-type ATPase 1 (967 aa).

Residues 1-70 (MEGSGDKRHE…GVNPWKILLR (70 aa)) lie on the Cytoplasmic side of the membrane. The chain crosses the membrane as a helical span at residues 71–91 (QVSNGLTAVLVVAMVVSFAVK). Position 92 (Asp-92) is a topological domain, extracellular. The chain crosses the membrane as a helical span at residues 93–113 (YAEAGVLVIVIAFNTIVGFVQ). At 114–254 (EYRAEKTMDA…TQSTPMQRKL (141 aa)) the chain is on the cytoplasmic side. The chain crosses the membrane as a helical span at residues 255–275 (NLMAYMLLAFALLLALIVFAV). Residues 276-283 (NKFNFSTE) are Extracellular-facing. Asn-279 is a glycosylation site (N-linked (GlcNAc...) asparagine). The chain crosses the membrane as a helical span at residues 284–304 (VVIYAIALSIAIIPEGLIAVI). Topologically, residues 305–732 (TIVQALGVRR…GRRIFSNIKK (428 aa)) are cytoplasmic. Asp-340 serves as the catalytic 4-aspartylphosphate intermediate. Residues Asp-340 and Thr-342 each coordinate Mg(2+). Thr-342, Glu-425, Lys-478, Arg-523, Thr-587, Gly-588, Asp-589, Arg-651, and Lys-657 together coordinate ATP. Residue Asp-676 participates in Mg(2+) binding. Asn-679 is an ATP binding site. The helical transmembrane segment at 733 to 753 (FVLHLLSTNVGQVIVLLIGLA) threads the bilayer. Residues 754-812 (FKDRTGTSVFPLSPVQILFLNLVTGTPPAMALGIEPASSSVMQVPPHVKGLFTVELIMD) lie on the Extracellular side of the membrane. A helical membrane pass occupies residues 813-833 (IFIFGTFIGILALASWVLVIY). Residues 834–900 (PFGNSDLATL…GGASRFFSNK (67 aa)) lie on the Cytoplasmic side of the membrane. Residues 901–921 (VLVASVFIGALLPIPTIYIGT) traverse the membrane as a helical segment. The Extracellular portion of the chain corresponds to 922–931 (LNTEVFKQEG). A helical membrane pass occupies residues 932-952 (ITWEWIIVIVSVFVFFLLSEF). Residues 953–967 (YKLLKRRFIKTPYNM) lie on the Cytoplasmic side of the membrane.

The protein belongs to the cation transport ATPase (P-type) (TC 3.A.3) family. Type IID subfamily. Mg(2+) serves as cofactor. The active site is phosphorylated in presence of sodium or potassium and in conditions of higher pH. Not phosphorylated in presence of calcium ions.

It is found in the cell membrane. The enzyme catalyses Na(+)(in) + ATP + H2O = Na(+)(out) + ADP + phosphate + H(+). It carries out the reaction K(+)(in) + ATP + H2O = K(+)(out) + ADP + phosphate + H(+). Its function is as follows. Catalyzes the hydrolysis of ATP coupled with the export of sodium and potassium from the cell. May pump potassium inefficiently. May transport other cations such as lithium. Sodium/potassium efflux ATPases are involved in salt tolerance and maintaining the membrane potential across the plasma membrane in high salinity (Na+) or alkaline (K+) environments. The sequence is that of Sodium/potassium exporting P-type ATPase 1 from Physcomitrium patens (Spreading-leaved earth moss).